The following is a 277-amino-acid chain: Probable endonuclease 4 (277 aa).

Positions 67, 107, 142, 176, 179, 211, 224, 226, and 256 each coordinate Zn(2+).

This sequence belongs to the AP endonuclease 2 family. It depends on Zn(2+) as a cofactor.

The catalysed reaction is Endonucleolytic cleavage to 5'-phosphooligonucleotide end-products.. Functionally, endonuclease IV plays a role in DNA repair. It cleaves phosphodiester bonds at apurinic or apyrimidinic (AP) sites, generating a 3'-hydroxyl group and a 5'-terminal sugar phosphate. The protein is Probable endonuclease 4 of Clostridium botulinum (strain Alaska E43 / Type E3).